Consider the following 82-residue polypeptide: Small ribosomal subunit protein bS16 (82 aa).

This sequence belongs to the bacterial ribosomal protein bS16 family.

The chain is Small ribosomal subunit protein bS16 from Aeromonas hydrophila subsp. hydrophila (strain ATCC 7966 / DSM 30187 / BCRC 13018 / CCUG 14551 / JCM 1027 / KCTC 2358 / NCIMB 9240 / NCTC 8049).